Here is a 151-residue protein sequence, read N- to C-terminus: uncharacterized protein (151 aa).

3 helical membrane passes run 14–34 (GAAL…YWLI), 45–65 (ISLV…GYLI), and 91–111 (VIVA…ASLI).

It is found in the cell membrane. This is an uncharacterized protein from Bacillus subtilis (strain 168).